Consider the following 451-residue polypeptide: Phosphoglucosamine mutase (451 aa).

Residue Ser102 is the Phosphoserine intermediate of the active site. Residues Ser102, Asp243, Asp245, and Asp247 each coordinate Mg(2+). Ser102 is modified (phosphoserine).

It belongs to the phosphohexose mutase family. It depends on Mg(2+) as a cofactor. In terms of processing, activated by phosphorylation.

It carries out the reaction alpha-D-glucosamine 1-phosphate = D-glucosamine 6-phosphate. In terms of biological role, catalyzes the conversion of glucosamine-6-phosphate to glucosamine-1-phosphate. This chain is Phosphoglucosamine mutase, found in Salinispora arenicola (strain CNS-205).